The following is a 303-amino-acid chain: MMKKWLLAAASLLMVVTLAGCGSNTIATLKGGKVTQDEFYKEIKETSAGKQQVQQMILQKALQEQYGSKSLTKKIDKTYNTYKKQYGSSFTSVLAQSGLTTSSFKNQITTQMLANAALKANKKVTNADLKKQWKTYEPKVEVQHILVEKKDTAETVISELKKDNSTKNFTALAKKYSTDTGTKKDGGKLPVFDSTDTSLDPTFKTAAFKLKTNEYTTTPVKTSYGYHVIRMIKNPGKGKMADHKKTLTDQVYAKWANDQTVMAKVYTKVLKKADVTIKDKDLSDILSSYGVNAKKSSAKSSSK.

Positions 1–20 (MMKKWLLAAASLLMVVTLAG) are cleaved as a signal peptide. Cys-21 carries the N-palmitoyl cysteine lipid modification. Cys-21 is lipidated: S-diacylglycerol cysteine. The PpiC domain occupies 137 to 233 (EPKVEVQHIL…YGYHVIRMIK (97 aa)).

It belongs to the PrsA family.

It is found in the cell membrane. The enzyme catalyses [protein]-peptidylproline (omega=180) = [protein]-peptidylproline (omega=0). Functionally, plays a major role in protein secretion by helping the post-translocational extracellular folding of several secreted proteins. The protein is Foldase protein PrsA of Latilactobacillus sakei subsp. sakei (strain 23K) (Lactobacillus sakei subsp. sakei).